A 428-amino-acid polypeptide reads, in one-letter code: Adenylosuccinate synthetase (428 aa).

Residues 13 to 19 (GDEGKGK) and 41 to 43 (GHT) each bind GTP. The active-site Proton acceptor is the Asp14. Residues Asp14 and Gly41 each coordinate Mg(2+). IMP is bound by residues 14 to 17 (DEGK), 39 to 42 (NAGH), Thr130, Arg144, Gln223, Thr238, and Arg302. The Proton donor role is filled by His42. 298-304 (ASTGRRR) is a binding site for substrate. GTP is bound by residues Arg304, 330 to 332 (KLD), and 412 to 414 (STG).

It belongs to the adenylosuccinate synthetase family. In terms of assembly, homodimer. Requires Mg(2+) as cofactor.

It is found in the cytoplasm. The catalysed reaction is IMP + L-aspartate + GTP = N(6)-(1,2-dicarboxyethyl)-AMP + GDP + phosphate + 2 H(+). It functions in the pathway purine metabolism; AMP biosynthesis via de novo pathway; AMP from IMP: step 1/2. In terms of biological role, plays an important role in the de novo pathway of purine nucleotide biosynthesis. Catalyzes the first committed step in the biosynthesis of AMP from IMP. In Dichelobacter nodosus (strain VCS1703A), this protein is Adenylosuccinate synthetase.